We begin with the raw amino-acid sequence, 445 residues long: Serine/threonine-protein kinase Nek2 (445 aa).

The Protein kinase domain maps to 8–271 (YEVLYTIGTG…VEEILENPLI (264 aa)). ATP-binding positions include 14-22 (IGTGSYGRC) and K37. D141 serves as the catalytic Proton acceptor. The residue at position 170 (T170) is a Phosphothreonine; by autocatalysis. The residue at position 171 (S171) is a Phosphoserine; by autocatalysis. Residues T175 and T179 each carry the phosphothreonine; by autocatalysis modification. Residue S184 is modified to Phosphoserine. The residue at position 241 (S241) is a Phosphoserine; by autocatalysis. Residues 264-445 (EILENPLIAD…LKSRQILGMR (182 aa)) are interaction with PCNT. 2 positions are modified to phosphoserine: S296 and S300. Residues 301–445 (PVLSELKLKE…LKSRQILGMR (145 aa)) form an interaction with CEP85 region. Residues 303–362 (LSELKLKEIQLQERERALKAREERLEQKEQELCVRERLAEDKLARAENLLKNYSLLKERK) adopt a coiled-coil conformation. The leucine-zipper stretch occupies residues 306 to 334 (LKLKEIQLQERERALKAREERLEQKEQEL). The interval 329–445 (QKEQELCVRE…LKSRQILGMR (117 aa)) is necessary for interaction with MAD1L1. Residues 333-370 (ELCVRERLAEDKLARAENLLKNYSLLKERKFLSLASNP) form a required for microtubule binding and for localization to the centrosomes region. S356 and S365 each carry phosphoserine; by STK3/MST2. Phosphoserine occurs at positions 387, 390, 397, and 402. The segment at 403-439 (QLTSKSKCKDLKKRLHAAQLRAQALSDIEKNYQLKSR) is interaction with SAV1 and STK3/MST2. S406 carries the post-translational modification Phosphoserine; by STK3/MST2. Residues 406–430 (SKSKCKDLKKRLHAAQLRAQALSDI) adopt a coiled-coil conformation. S428 bears the Phosphoserine mark. Residue S438 is modified to Phosphoserine; by STK3/MST2.

This sequence belongs to the protein kinase superfamily. NEK Ser/Thr protein kinase family. NIMA subfamily. Isoform 1, isoform 2 and isoform 4 form homo- and heterodimers. Interacts with NECAB3 and HMGA2. Isoform 1 interacts with CDC20, CTNB1, MAD1L1, MAPK, NEK11, NPM1, NDC80, PCNT and SGO1. Isoform 1 interacts with STK3/MST2 (via SARAH domain) and SAV1 (via SARAH domain). Isoform 1 and isoform 2 interact with MAD2L1. Isoform 1 and isoform 4 interact with PPP1CA and PPP1CC. Interacts with CEP68; the interaction leads to phosphorylation of CEP68. Interacts with CNTLN; the interaction leads to phosphorylation of CNTLN. Isoform 1 interacts with CEP85. Interacts with CCDC102B; the interaction leads to phosphorylation of CCDC102B. It depends on Mg(2+) as a cofactor. Activated by autophosphorylation. Protein phosphatase 1 represses autophosphorylation and activation of isoform 1 by dephosphorylation. Phosphorylation by STK3/MST2 is necessary for its localization to the centrosome. Isoform 1 and isoform 2 are expressed in peripheral blood T-cells and a wide variety of transformed cell types. Isoform 1 and isoform 4 are expressed in the testis. Up-regulated in various cancer cell lines, as well as primary breast tumors.

It localises to the nucleus. The protein localises to the nucleolus. It is found in the cytoplasm. The protein resides in the cytoskeleton. Its subcellular location is the microtubule organizing center. It localises to the centrosome. The protein localises to the spindle pole. It is found in the chromosome. The protein resides in the centromere. Its subcellular location is the kinetochore. The enzyme catalyses L-seryl-[protein] + ATP = O-phospho-L-seryl-[protein] + ADP + H(+). It catalyses the reaction L-threonyl-[protein] + ATP = O-phospho-L-threonyl-[protein] + ADP + H(+). With respect to regulation, isoform 1 is inhibited by ionizing radiation in the presence of PPP1CA. Its catalytic activity is inhibited by the inhibitor CCT241950. In the presence of this inhibitor, displays an autoinhibited conformation: Tyr-70 side chain points into the active site, interacts with the activation loop, and blocks the alphaC helix. In terms of biological role, protein kinase which is involved in the control of centrosome separation and bipolar spindle formation in mitotic cells and chromatin condensation in meiotic cells. Regulates centrosome separation (essential for the formation of bipolar spindles and high-fidelity chromosome separation) by phosphorylating centrosomal proteins such as CROCC, CEP250 and NINL, resulting in their displacement from the centrosomes. Regulates kinetochore microtubule attachment stability in mitosis via phosphorylation of NDC80. Involved in regulation of mitotic checkpoint protein complex via phosphorylation of CDC20 and MAD2L1. Plays an active role in chromatin condensation during the first meiotic division through phosphorylation of HMGA2. Phosphorylates: PPP1CC; SGO1; NECAB3 and NPM1. Essential for localization of MAD2L1 to kinetochore and MAPK1 and NPM1 to the centrosome. Phosphorylates CEP68 and CNTLN directly or indirectly. NEK2-mediated phosphorylation of CEP68 promotes CEP68 dissociation from the centrosome and its degradation at the onset of mitosis. Involved in the regulation of centrosome disjunction. Phosphorylates CCDC102B either directly or indirectly which causes CCDC102B to dissociate from the centrosome and allows for centrosome separation. Functionally, phosphorylates and activates NEK11 in G1/S-arrested cells. Its function is as follows. Not present in the nucleolus and, in contrast to isoform 1, does not phosphorylate and activate NEK11 in G1/S-arrested cells. The chain is Serine/threonine-protein kinase Nek2 (NEK2) from Homo sapiens (Human).